Consider the following 490-residue polypeptide: GTPase Der (490 aa).

2 consecutive EngA-type G domains span residues 3 to 166 and 203 to 376; these read PVVA…MEDL and IKLA…DSST. Residues 9 to 16, 56 to 60, 118 to 121, 209 to 216, 256 to 260, and 321 to 324 contribute to the GTP site; these read GRPNVGKS, DTGGI, NKTD, DTAGV, and NKWD. The KH-like domain occupies 377-461; the sequence is RRVGTSMLTR…PIRIQFKEGE (85 aa).

Belongs to the TRAFAC class TrmE-Era-EngA-EngB-Septin-like GTPase superfamily. EngA (Der) GTPase family. As to quaternary structure, associates with the 50S ribosomal subunit.

GTPase that plays an essential role in the late steps of ribosome biogenesis. The polypeptide is GTPase Der (Escherichia coli O157:H7).